A 206-amino-acid polypeptide reads, in one-letter code: Shieldin complex subunit 1 (206 aa).

The segment at 27 to 94 (SSYEASQRVS…GQLETNEEED (68 aa)) is disordered. Over residues 32–55 (SQRVSQGSSNSLSSLESHPFLSSS) the composition is skewed to low complexity. The segment covering 56-74 (TTDPDSNSLNTEQKGSWDS) has biased composition (polar residues).

Component of the shieldin complex, consisting of SHLD1, SHLD2, SHLD3 and MAD2L2/REV7. Within the complex, SHLD2 forms a scaffold which interacts with a SHLD3-MAD2L2 subcomplex via its N-terminus, and with SHLD1 via its C-terminus. Interacts with ASTE1.

It is found in the chromosome. In terms of biological role, component of the shieldin complex, which plays an important role in repair of DNA double-stranded breaks (DSBs). During G1 and S phase of the cell cycle, the complex functions downstream of TP53BP1 to promote non-homologous end joining (NHEJ) and suppress DNA end resection. Mediates various NHEJ-dependent processes including immunoglobulin class-switch recombination, and fusion of unprotected telomeres. This Mus musculus (Mouse) protein is Shieldin complex subunit 1.